We begin with the raw amino-acid sequence, 184 residues long: Myosin regulatory light chain 1 (184 aa).

Residues 1-29 (MFSSKENSLGAKRAPFSSNTTSSQRVAAQ) form a disordered region. Ser36 carries the phosphoserine modification. EF-hand domains lie at 45–80 (SQIQ…LNQD) and 114–149 (SPRN…MGDR). Ca(2+) is bound by residues Asp58, Asp60, Asp62, Asn64, and Asp69.

As to quaternary structure, binds to myosin II chains myo2 and myo3.

It is found in the cytoplasm. In Schizosaccharomyces pombe (strain 972 / ATCC 24843) (Fission yeast), this protein is Myosin regulatory light chain 1 (rlc1).